A 606-amino-acid chain; its full sequence is Granule-bound starch synthase 1, chloroplastic/amyloplastic (606 aa).

Residues 1 to 76 (MSALTTSQLA…GSRRFPSVVV (76 aa)) constitute a chloroplast transit peptide. The disordered stretch occupies residues 29-67 (RHGFQGLKPRSPAGGDASSLSVTTSARATPKQQRSVQRG). The segment covering 46–66 (SSLSVTTSARATPKQQRSVQR) has biased composition (polar residues). Position 97 (Lys-97) interacts with ADP-alpha-D-glucose.

It belongs to the glycosyltransferase 1 family. Bacterial/plant glycogen synthase subfamily.

It localises to the plastid. The protein resides in the chloroplast. The protein localises to the amyloplast. The catalysed reaction is an NDP-alpha-D-glucose + [(1-&gt;4)-alpha-D-glucosyl](n) = [(1-&gt;4)-alpha-D-glucosyl](n+1) + a ribonucleoside 5'-diphosphate + H(+). Its pathway is glycan biosynthesis; starch biosynthesis. Functionally, required for the synthesis of amylose in endosperm. The sequence is that of Granule-bound starch synthase 1, chloroplastic/amyloplastic (WAXY) from Oryza sativa (Rice).